Consider the following 97-residue polypeptide: Large ribosomal subunit protein bL28 (97 aa).

Residues 1–20 are disordered; that stretch reads MSRRCELTAKGPQVGHKVSH.

Belongs to the bacterial ribosomal protein bL28 family.

This is Large ribosomal subunit protein bL28 from Afipia carboxidovorans (strain ATCC 49405 / DSM 1227 / KCTC 32145 / OM5) (Oligotropha carboxidovorans).